An 856-amino-acid polypeptide reads, in one-letter code: Envelope glycoprotein gp160 (856 aa).

Residues 1–31 form the signal peptide; sequence MKVKGIQGNWQNWWKWGTLILGLVIICSAAE. Residues 32–684 lie on the Extracellular side of the membrane; it reads NLWVTVYYGV…ISNWLWYIKI (653 aa). The cysteines at positions 53 and 73 are disulfide-linked. Asn-87, Asn-132, Asn-138, Asn-152, Asn-156, Asn-183, and Asn-198 each carry an N-linked (GlcNAc...) asparagine; by host glycan. Disulfide bonds link Cys-118–Cys-206, Cys-125–Cys-197, Cys-130–Cys-153, Cys-219–Cys-248, and Cys-229–Cys-240. The V1 stretch occupies residues 130–152; the sequence is CHNITIKDNNTNVDTEMKEEIKN. The interval 153 to 197 is V2; the sequence is CSYNMTTELRDKQRKIYSLFYRLDIVPIGGNSSNGDSSKYRLINC. N-linked (GlcNAc...) asparagine; by host glycans are attached at residues Asn-242, Asn-263, Asn-277, Asn-294, Asn-302, Asn-332, Asn-339, Asn-355, and Asn-364. A V3 region spans residues 297–330; sequence CMRPNNNTRKSISIGPGRAFFATGDIIGDIRQAH. The cysteines at positions 297 and 331 are disulfide-linked. The segment at 365–375 is CD4-binding loop; sequence SSGGDVEITTH. 2 disulfide bridges follow: Cys-379–Cys-445 and Cys-386–Cys-418. Residues 386 to 418 are V4; it reads CNTSGLFNGTWLNGTSNNTWKIDTVNDTIILPC. Residues Asn-387, Asn-393, Asn-398, Asn-402, Asn-411, Asn-448, Asn-461, Asn-462, and Asn-465 are each glycosylated (N-linked (GlcNAc...) asparagine; by host). V5 regions lie at residues 461–471 and 463–471; these read NNTSNETFRPG and TSNETFRPG. A fusion peptide region spans residues 512-532; sequence AIGMGAFFLGFLGAAGSTMGA. An immunosuppression region spans residues 574–592; the sequence is KQLQARILAVERYLKDQQL. Residues Cys-598 and Cys-604 are joined by a disulfide bond. Residues Asn-611, Asn-616, and Asn-637 are each glycosylated (N-linked (GlcNAc...) asparagine; by host). Residues 633–667 are a coiled coil; sequence KEVSNYTQVIYNLIEESQTQQEINERDLLALDKWA. The segment at 662–683 is MPER; binding to GalCer; it reads ALDKWANLWNWFDISNWLWYIK. The chain crosses the membrane as a helical span at residues 685–705; that stretch reads FIMIVGGLIGLRIVFAVLSII. Residues 706–856 lie on the Cytoplasmic side of the membrane; it reads NRVRQGYSPL…IRQGLERALL (151 aa). The short motif at 712–715 is the YXXL motif; contains endocytosis signal element; sequence YSPL. The interval 720–742 is disordered; that stretch reads LTHHQREPDRPERIEEGGGEQDR. Residues 723–742 are compositionally biased toward basic and acidic residues; sequence HQREPDRPERIEEGGGEQDR. The S-palmitoyl cysteine; by host moiety is linked to residue Cys-764. Positions 855–856 match the Di-leucine internalization motif motif; that stretch reads LL.

Belongs to the HIV-1 env protein family. As to quaternary structure, the mature envelope protein (Env) consists of a homotrimer of non-covalently associated gp120-gp41 heterodimers. The resulting complex protrudes from the virus surface as a spike. There seems to be as few as 10 spikes on the average virion. Interacts with host CD4, CCR5 and CXCR4. Gp120 also interacts with the C-type lectins CD209/DC-SIGN and CLEC4M/DC-SIGNR (collectively referred to as DC-SIGN(R)). Gp120 and gp41 interact with GalCer. Gp120 interacts with host ITGA4/ITGB7 complex; on CD4+ T-cells, this interaction results in rapid activation of integrin ITGAL/LFA-1, which facilitates efficient cell-to-cell spreading of HIV-1. Gp120 interacts with cell-associated heparan sulfate; this interaction increases virus infectivity on permissive cells and may be involved in infection of CD4- cells. The mature envelope protein (Env) consists of a homotrimer of non-covalently associated gp120-gp41 heterodimers. The resulting complex protrudes from the virus surface as a spike. There seems to be as few as 10 spikes on the average virion. Highly glycosylated by host. The high number of glycan on the protein is reffered to as 'glycan shield' because it contributes to hide protein sequence from adaptive immune system. In terms of processing, palmitoylation of the transmembrane protein and of Env polyprotein (prior to its proteolytic cleavage) is essential for their association with host cell membrane lipid rafts. Palmitoylation is therefore required for envelope trafficking to classical lipid rafts, but not for viral replication. Post-translationally, specific enzymatic cleavages in vivo yield mature proteins. Envelope glycoproteins are synthesized as an inactive precursor that is heavily N-glycosylated and processed likely by host cell furin in the Golgi to yield the mature SU and TM proteins. The cleavage site between SU and TM requires the minimal sequence [KR]-X-[KR]-R. About 2 of the 9 disulfide bonds of gp41 are reduced by P4HB/PDI, following binding to CD4 receptor.

It localises to the virion membrane. The protein localises to the host cell membrane. Its subcellular location is the host endosome membrane. Its function is as follows. Oligomerizes in the host endoplasmic reticulum into predominantly trimers. In a second time, gp160 transits in the host Golgi, where glycosylation is completed. The precursor is then proteolytically cleaved in the trans-Golgi and thereby activated by cellular furin or furin-like proteases to produce gp120 and gp41. Attaches the virus to the host lymphoid cell by binding to the primary receptor CD4. This interaction induces a structural rearrangement creating a high affinity binding site for a chemokine coreceptor like CXCR4 and/or CCR5. Acts as a ligand for CD209/DC-SIGN and CLEC4M/DC-SIGNR, which are respectively found on dendritic cells (DCs), and on endothelial cells of liver sinusoids and lymph node sinuses. These interactions allow capture of viral particles at mucosal surfaces by these cells and subsequent transmission to permissive cells. HIV subverts the migration properties of dendritic cells to gain access to CD4+ T-cells in lymph nodes. Virus transmission to permissive T-cells occurs either in trans (without DCs infection, through viral capture and transmission), or in cis (following DCs productive infection, through the usual CD4-gp120 interaction), thereby inducing a robust infection. In trans infection, bound virions remain infectious over days and it is proposed that they are not degraded, but protected in non-lysosomal acidic organelles within the DCs close to the cell membrane thus contributing to the viral infectious potential during DCs' migration from the periphery to the lymphoid tissues. On arrival at lymphoid tissues, intact virions recycle back to DCs' cell surface allowing virus transmission to CD4+ T-cells. Functionally, acts as a class I viral fusion protein. Under the current model, the protein has at least 3 conformational states: pre-fusion native state, pre-hairpin intermediate state, and post-fusion hairpin state. During fusion of viral and target intracellular membranes, the coiled coil regions (heptad repeats) assume a trimer-of-hairpins structure, positioning the fusion peptide in close proximity to the C-terminal region of the ectodomain. The formation of this structure appears to drive apposition and subsequent fusion of viral and target cell membranes. Complete fusion occurs in host cell endosomes and is dynamin-dependent, however some lipid transfer might occur at the plasma membrane. The virus undergoes clathrin-dependent internalization long before endosomal fusion, thus minimizing the surface exposure of conserved viral epitopes during fusion and reducing the efficacy of inhibitors targeting these epitopes. Membranes fusion leads to delivery of the nucleocapsid into the cytoplasm. This Homo sapiens (Human) protein is Envelope glycoprotein gp160.